The primary structure comprises 618 residues: Prothrombin (618 aa).

An N-terminal signal peptide occupies residues 1-24; it reads MSHVRGLGLPGCLALAALVSLVHS. Positions 25-43 are excised as a propeptide; sequence QHVFLAPQQALSLLQRVRR. The Gla domain occupies 44 to 90; the sequence is ANSGFLEELRKGNLERECVEEQCSYEEAFEALESPQDTDVFWAKYTV. Residues Glu50, Glu51, Glu58, Glu60, Glu63, Glu64, Glu69, Glu70, Glu73, and Glu76 each carry the 4-carboxyglutamate modification. A disulfide bond links Cys61 and Cys66. 10 cysteine pairs are disulfide-bonded: Cys91–Cys104, Cys109–Cys187, Cys130–Cys170, Cys158–Cys182, Cys215–Cys293, Cys236–Cys276, Cys264–Cys288, Cys333–Cys479, Cys388–Cys404, and Cys533–Cys547. 2 consecutive Kringle domains span residues 109 to 187 and 215 to 292; these read CAMD…VPVC and CLTE…NLNY. Residues Asn122 and Asn144 are each glycosylated (N-linked (GlcNAc...) asparagine). Residues 361-615 form the Peptidase S1 domain; that stretch reads IVEGWDAEKG…LKRWIQKVID (255 aa). His403 (charge relay system) is an active-site residue. Residue Asn413 is glycosylated (N-linked (GlcNAc...) asparagine). Residue Asp459 is the Charge relay system of the active site. Residues 548–570 form a high affinity receptor-binding region which is also known as the TP508 peptide region; that stretch reads AGFKVNDTKRGDACEGDSGGPFV. A glycan (N-linked (GlcNAc...) asparagine) is linked at Asn553. An intrachain disulfide couples Cys561 to Cys591. Residue Ser565 is the Charge relay system of the active site.

It belongs to the peptidase S1 family. In terms of assembly, heterodimer (named alpha-thrombin) of a light and a heavy chain; disulfide-linked. Forms a heterodimer with SERPINA5. In plasma, interacts (via N-terminus) with alpha-1-microglobulin; this interaction does not prevent the activation of prothrombin to thrombin. The gamma-carboxyglutamyl residues, which bind calcium ions, result from the carboxylation of glutamyl residues by a microsomal enzyme, the vitamin K-dependent carboxylase. The modified residues are necessary for the calcium-dependent interaction with a negatively charged phospholipid surface, which is essential for the conversion of prothrombin to thrombin. Post-translationally, in the penultimate step of the coagulation cascade, prothrombin is converted to thrombin by the prothrombinase complex composed of factor Xa (F10), cofactor Va (F5), and phospholipids. This activation requires factor Xa-catalyzed sequential cleavage at 2 sites, Arg-311 and Arg-360, along 2 possible pathways. In the first pathway, the first cleavage occurs at Arg-311, leading to the formation of the inactive intermediate prethrombin-2. This pathway preferentially occurs on platelets and in the absence of cofactor Va. In the second pathway, the first cleavage occurs at Arg-360, which separates protease domain into 2 chains that remain connected through a disulfide bond and generates the active intermediate meizothrombin. The presence of cofactor Va directs activation along the meizothrombin pathway and greatly accelerates the rate of cleavage at Arg-360, but has a smaller effect on the cleavage of meizothrombin at Arg-311. Meizothrombin accumulates as an intermediate when prothrombinase is assembled on the membrane of red blood cells.

The catalysed reaction is Selective cleavage of Arg-|-Gly bonds in fibrinogen to form fibrin and release fibrinopeptides A and B.. Activity is promoted in the presence of negatively charged surfaces, such as polyphosphate and dextran sulfate. Inhibited by SERPINA5. Thrombin, which cleaves bonds after Arg and Lys, converts fibrinogen to fibrin and activates factors V, VII, VIII, XIII, and, in complex with thrombomodulin, protein C. Functions in blood homeostasis, inflammation and wound healing. Activates coagulation factor XI (F11); activation is promoted by the contact with negatively charged surfaces. Triggers the production of pro-inflammatory cytokines, such as MCP-1/CCL2 and IL8/CXCL8, in endothelial cells. The sequence is that of Prothrombin (F2) from Mus musculus (Mouse).